Consider the following 583-residue polypeptide: Proteasome-associated ATPase (583 aa).

Residues 2-90 are a coiled coil; sequence ASREDRDAAN…REEVDRLAQP (89 aa). An ATP-binding site is contributed by 271–276; it reads GCGKTL. The segment at 582–583 is docks into pockets in the proteasome alpha-ring; that stretch reads YL.

This sequence belongs to the AAA ATPase family. Homohexamer. Assembles into a hexameric ring structure that caps the 20S proteasome core. Strongly interacts with the prokaryotic ubiquitin-like protein Pup through a hydrophobic interface; the interacting region of ARC lies in its N-terminal coiled-coil domain. There is one Pup binding site per ARC hexamer ring. Upon ATP-binding, the C-terminus of ARC interacts with the alpha-rings of the proteasome core, possibly by binding to the intersubunit pockets.

The protein operates within protein degradation; proteasomal Pup-dependent pathway. In terms of biological role, ATPase which is responsible for recognizing, binding, unfolding and translocation of pupylated proteins into the bacterial 20S proteasome core particle. May be essential for opening the gate of the 20S proteasome via an interaction with its C-terminus, thereby allowing substrate entry and access to the site of proteolysis. Thus, the C-termini of the proteasomal ATPase may function like a 'key in a lock' to induce gate opening and therefore regulate proteolysis. The chain is Proteasome-associated ATPase from Acidothermus cellulolyticus (strain ATCC 43068 / DSM 8971 / 11B).